The following is a 481-amino-acid chain: Cobyric acid synthase (481 aa).

A GATase cobBQ-type domain is found at Asn-248–Phe-435. The active-site Nucleophile is the Cys-329. Residue His-427 is part of the active site.

It belongs to the CobB/CobQ family. CobQ subfamily.

The protein operates within cofactor biosynthesis; adenosylcobalamin biosynthesis. Its function is as follows. Catalyzes amidations at positions B, D, E, and G on adenosylcobyrinic A,C-diamide. NH(2) groups are provided by glutamine, and one molecule of ATP is hydrogenolyzed for each amidation. In Granulibacter bethesdensis (strain ATCC BAA-1260 / CGDNIH1), this protein is Cobyric acid synthase.